The primary structure comprises 255 residues: MASPRTPVSPPELPEKNFQYRQVQYWDQRYKDAADSGPYEWFGDFASFRALLEPELCPEDRILVLGCGNSALSYELFLGGFPNVTSVDYSPVVVAAMQVRYAHVPSLRWETMDVRALDFPSGSFDVVLEKGTLDAMLAGEPDPWNVSSEGVHTVDQVLSEVSRLLVPGGRFISMTSAGPHFRIRHYAQSRYDWSLRHTTYSSGFHFHFYIMHKGRALSVSQLALGAQILSSPSPPASPCFLQDSDNEDFLSAIQL.

Trp-26 and Tyr-30 together coordinate S-adenosyl-L-methionine. Tyr-39 carries the post-translational modification Phosphotyrosine. S-adenosyl-L-methionine is bound by residues Trp-41, Gly-66, 88-89 (DY), 113-114 (DV), and Lys-130. The Required for methyltransferase activity motif lies at 129-134 (EKGTLD).

Belongs to the methyltransferase superfamily.

It catalyses the reaction L-lysyl-[protein] + S-adenosyl-L-methionine = N(6)-methyl-L-lysyl-[protein] + S-adenosyl-L-homocysteine + H(+). It carries out the reaction N(6)-methyl-L-lysyl-[protein] + S-adenosyl-L-methionine = N(6),N(6)-dimethyl-L-lysyl-[protein] + S-adenosyl-L-homocysteine + H(+). The enzyme catalyses N(6),N(6)-dimethyl-L-lysyl-[protein] + S-adenosyl-L-methionine = N(6),N(6),N(6)-trimethyl-L-lysyl-[protein] + S-adenosyl-L-homocysteine + H(+). Protein-lysine methyltransferase that efficiently catalyzes three successive methylations on 'Lys-36' in eukaryotic translation elongation factor 1 alpha (EEF1A1 or EEF1A2). The chain is EEF1A lysine methyltransferase 4 from Mus musculus (Mouse).